The following is a 1804-amino-acid chain: MEPWSRWKTKRWIWDLTISTLALTFLFQAREVRGAAPVDILKALDFHNSPVGISKTTGFCTNRKNSKDPDVAYRVTEEAQISAPTKQLFPGGIFPQDFSILFTIKPKKGTQAFLLSLYNEHGIQQLGVEVGRSPVFLFEDHTGKPTPENYPLFSTVNIADGKWHRVAISVEKKTVTMIVDCKKKITKPLDRSERSIVDTNGIMVFGTRILETDVFQGDIQQFLITGDPKAAYDYCDHYSPDCDLTSKAAQAQEPHIDEYAPEDIIEYDYEYGETDYKEAESVTEMPTFTEETVAQTEANIVDDFQDYNYGTMEPYQTETPRRVSGSNEPNPVEEGFTEEYLTGEDYDVQRNTSEDILYGNKGVDGRDSDLLVDGDLGEYDFYEYKEYEERTTTSPNEEFGPGVPAETDFTETSINGHGAYGEKGQKGEPAVVEPGMLVEGPPGPAGPAGLMGPPGLQGPSGLPGDPGDRGPPGRPGLPGADGLPGPPGTMLMLPFRYGGDGSKGPTISAQEAQAQAILQQARIALRGPPGPMGLTGRPGPVGGPGSAGAKGESGDPGPQGPRGVQGPPGPTGKPGKRGRPGADGGRGMPGESGSKGDRGFDGLPGLPGDKGHRGERGPQGPPGLPGDDGMRGEDGEIGPRGLPGEAGPRGLLGPRGTPGPPGQPGIGGIDGPQGPKGNMGPQGEPGPPGQQGNPGPQGLPGPQGPIGPPGEKGPQGKPGLAGLPGADGPPGHPGKEGQSGEKGALGPPGPQGPIGYPGPRGVKGADGVRGLKGSKGEKGEDGFPGFKGDMGLKGDRGEVGQVGPRGEDGPEGPKGRAGPTGDPGPSGQAGEKGKLGVPGLPGYPGRQGPKGSTGFPGFPGANGEKGARGIAGKPGPRGQRGPTGPRGSRGARGPTGKPGPKGTSGGDGPPGPPGERGPQGPQGPVGFPGPKGPPGPAGKDGLPGHPGQRGETGFQGKTGPPGPGGVVGPQGPTGETGPIGERGHPGPPGPPGEQGLPGAAGKEGAKGDPGPQGISGKDGPAGIRGFPGERGLPGAQGAPGLKGGEGPQGPQGPVGSPGERGSAGTAGPIGLPGRPGPQGPPGPAGEKGAPGEKGPQGPAGRDGVQGPVGLPGPAGPAGSPGEDGDKGEIGEPGQKGSKGDKGENGPPGPPGLQGPVGAPGIAGGDGEPGPRGQQGMFGQKGDEGARGFPGLPGPIGLQGLPGPPGEKGENGDVGPMGPPGPPGPRGPQGPNGADGPQGPPGSIGSVGVVGDKGEPGEAGNPGPPGEAGSGGLKGERGEKGEAGPPGAAGPAGIKGPPGDDGPKGNPGPVGFPGDPGPPGEPGPAGQDGVGGDKGEDGDPGQPGPPGPSGEAGPPGPPGKRGPPGASGSEGRQGEKGAKGEAGAEGPPGKTGPVGPQGPSGKPGPEGLRGIPGPVGEQGLPGAAGQDGPPGPLGPPGLPGLKGDPGSKGEKGHPGLIGLIGPPGEQGEKGDRGLPGTQGSPGAKGDGGIPGPAGPIGPPGPPGLPGPAGPKGNKGSSGPTGQKGDSGMPGPPGPPGPPGEVIQPLPILSPKKTRRHTESIQGDAGDNILDYSDGMEEIFGSLNSLKQDIEHMKFPMGTQTNPARTCKDLQLSHPDFPDGEYWIDPNQGCSGDSFKVYCNFTAGGETCIYPDKKSEGVRISSWPKEKPGSWYSEFKRGKLLSYLDVEGNSINMVQMTFLKLLTASARQNFTYNCHQSAAWYDVLSGSYDKALRFLGSNDEEMSYENNPHIKALYDGCASRKGYEKTVIEINTPKIDQVPIIDVMINDFGDQNQKFGFEVGPACFLG.

A signal peptide spans 1–34 (MEPWSRWKTKRWIWDLTISTLALTFLFQAREVRG). A propeptide spans 35 to 511 (AAPVDILKAL…SKGPTISAQE (477 aa)) (N-terminal propeptide). 2 cysteine pairs are disulfide-bonded: Cys60-Cys242 and Cys181-Cys235. The Laminin G-like domain maps to 70–242 (DVAYRVTEEA…DYCDHYSPDC (173 aa)). The segment at 229-417 (KAAYDYCDHY…DFTETSINGH (189 aa)) is nonhelical region. Polar residues predominate over residues 315–329 (YQTETPRRVSGSNEP). 2 disordered regions span residues 315-334 (YQTE…PVEE) and 433-506 (EPGM…KGPT). Positions 418–506 (GAYGEKGQKG…YGGDGSKGPT (89 aa)) are triple-helical region (interrupted). The region spanning 440 to 488 (GPPGPAGPAGLMGPPGLQGPSGLPGDPGDRGPPGRPGLPGADGLPGPPG) is the Collagen-like 1 domain. Composition is skewed to low complexity over residues 447 to 465 (PAGL…LPGD) and 477 to 494 (LPGA…LMLP). A short nonhelical segment region spans residues 507 to 509 (ISA). A telopeptide region spans residues 510–527 (QEAQAQAILQQARIALRG). Residues 526-1567 (RGPPGPMGLT…SIQGDAGDNI (1042 aa)) are disordered. 2 Collagen-like domains span residues 527–584 (GPPG…GADG) and 567–623 (PPGP…GPPG). A triple-helical region region spans residues 528-1540 (PPGPMGLTGR…PGPPGPPGEV (1013 aa)). 2 stretches are compositionally biased toward gly residues: residues 539-548 (GPVGGPGSAG) and 581-590 (GADGGRGMPG). At Lys610 the chain carries Allysine. Positions 639-655 (PRGLPGEAGPRGLLGPR) are enriched in low complexity. Pro residues predominate over residues 697–708 (QGLPGPQGPIGP). Residues 715-726 (QGKPGLAGLPGA) are compositionally biased toward low complexity. The Collagen-like 4 domain occupies 728 to 781 (GPPGHPGKEGQSGEKGALGPPGPQGPIGYPGPRGVKGADGVRGLKGSKGEKGED). Residues 805 to 814 (RGEDGPEGPK) show a composition bias toward basic and acidic residues. Composition is skewed to low complexity over residues 873-901 (KPGP…PGPK), 916-925 (RGPQGPQGPV), and 969-979 (PQGPTGETGPI). Positions 1040 to 1049 (GLKGGEGPQG) are enriched in gly residues. A compositionally biased stretch (pro residues) spans 1074 to 1083 (RPGPQGPPGP). Low complexity predominate over residues 1084–1108 (AGEKGAPGEKGPQGPAGRDGVQGPV). Gly residues predominate over residues 1160–1169 (GIAGGDGEPG). Positions 1216–1227 (MGPPGPPGPRGP) are enriched in pro residues. Composition is skewed to low complexity over residues 1240–1249 (PGSIGSVGVV) and 1282–1296 (AGPP…IKGP). The segment covering 1341 to 1360 (QPGPPGPSGEAGPPGPPGKR) has biased composition (pro residues). Composition is skewed to low complexity over residues 1383–1392 (AEGPPGKTGP) and 1417–1426 (QGLPGAAGQD). 2 Collagen-like domains span residues 1427–1482 (GPPG…SPGA) and 1481–1539 (GAKG…PPGE). A compositionally biased stretch (pro residues) spans 1428–1437 (PPGPLGPPGL). Lys1450 carries the post-translational modification Allysine. The span at 1453–1462 (PGLIGLIGPP) shows a compositional bias: low complexity. The span at 1481 to 1490 (GAKGDGGIPG) shows a compositional bias: gly residues. Residues 1491 to 1507 (PAGPIGPPGPPGLPGPA) are compositionally biased toward pro residues. Low complexity predominate over residues 1509-1519 (PKGNKGSSGPT). Pro residues predominate over residues 1528 to 1537 (PGPPGPPGPP). The tract at residues 1541 to 1561 (IQPLPILSPKKTRRHTESIQG) is nonhelical region (C-terminal). The propeptide at 1562-1804 (DAGDNILDYS…FEVGPACFLG (243 aa)) is C-terminal propeptide. Positions 1575-1803 (EEIFGSLNSL…GFEVGPACFL (229 aa)) constitute a Fibrillar collagen NC1 domain. Cysteines 1605 and 1637 form a disulfide. The Ca(2+) site is built by Asp1623, Asn1625, Gln1626, Cys1628, and Asp1631. Asn1638 carries N-linked (GlcNAc...) asparagine glycosylation. 2 cysteine pairs are disulfide-bonded: Cys1646–Cys1801 and Cys1712–Cys1755.

Belongs to the fibrillar collagen family. As to quaternary structure, trimers composed of three different chains: alpha 1(XI), alpha 2(XI), and alpha 3(XI). Alpha 3(XI) is a post-translational modification of alpha 1(II). Alpha 1(V) can also be found instead of alpha 3(XI)=1(II). In terms of processing, prolines at the third position of the tripeptide repeating unit (G-X-Y) are hydroxylated in some or all of the chains. N-glycosylated.

The protein resides in the secreted. It localises to the extracellular space. The protein localises to the extracellular matrix. Its function is as follows. May play an important role in fibrillogenesis by controlling lateral growth of collagen II fibrils. This chain is Collagen alpha-1(XI) chain (Col11a1), found in Mus musculus (Mouse).